The sequence spans 194 residues: Oligoribonuclease (194 aa).

The Exonuclease domain occupies 11 to 174; the sequence is LIWIDLEMTG…SDVRDSIDEL (164 aa). Residue Y132 is part of the active site.

This sequence belongs to the oligoribonuclease family.

It is found in the cytoplasm. Its function is as follows. 3'-to-5' exoribonuclease specific for small oligoribonucleotides. The sequence is that of Oligoribonuclease from Xanthomonas campestris pv. campestris (strain ATCC 33913 / DSM 3586 / NCPPB 528 / LMG 568 / P 25).